Here is a 298-residue protein sequence, read N- to C-terminus: Pheromone-regulated membrane protein 9 (298 aa).

Residues 1-111 lie on the Cytoplasmic side of the membrane; it reads MSPQYHFYFV…YWIYEVTRHK (111 aa). Residues 112–132 traverse the membrane as a helical segment; the sequence is AAVILLVLIVTSILLLVFFYN. Over 133-137 the chain is Extracellular; it reads TEFCV. Residues 138–158 traverse the membrane as a helical segment; it reads AFEILLFSFCFPGTCMVVIAF. Topologically, residues 159–298 are cytoplasmic; it reads SEPIGDREFK…QEYPGVDEFF (140 aa). The disordered stretch occupies residues 235 to 262; it reads SSASNVKDAQSNDETAGTPNEAAESSSF. The segment at 297-298 is COPII binding; the sequence is FF.

This sequence belongs to the DUP/COS family. Interacts with PRM8. Binds to COPII coated vesicles.

It is found in the cell membrane. In terms of biological role, may be involved in endoplasmic reticulum exit trafficking of proteins. The chain is Pheromone-regulated membrane protein 9 (PRM9) from Saccharomyces cerevisiae (strain ATCC 204508 / S288c) (Baker's yeast).